The sequence spans 310 residues: tRNA dimethylallyltransferase (310 aa).

Position 14 to 21 (14 to 21 (GPTASGKT)) interacts with ATP. Position 16-21 (16-21 (TASGKT)) interacts with substrate. Interaction with substrate tRNA stretches follow at residues 39 to 42 (DSAL), 163 to 167 (QRLSR), and 244 to 249 (RCVGYR).

The protein belongs to the IPP transferase family. Monomer. Requires Mg(2+) as cofactor.

It carries out the reaction adenosine(37) in tRNA + dimethylallyl diphosphate = N(6)-dimethylallyladenosine(37) in tRNA + diphosphate. Functionally, catalyzes the transfer of a dimethylallyl group onto the adenine at position 37 in tRNAs that read codons beginning with uridine, leading to the formation of N6-(dimethylallyl)adenosine (i(6)A). The sequence is that of tRNA dimethylallyltransferase from Aeromonas salmonicida (strain A449).